A 258-amino-acid polypeptide reads, in one-letter code: Acetylglutamate kinase (258 aa).

Substrate is bound by residues Gly44 to Gly45, Arg66, and Asn158. Residues Asp181–Leu186 and Ile209–Thr211 each bind ATP.

Belongs to the acetylglutamate kinase family. ArgB subfamily. Homodimer.

The protein resides in the cytoplasm. The enzyme catalyses N-acetyl-L-glutamate + ATP = N-acetyl-L-glutamyl 5-phosphate + ADP. The protein operates within amino-acid biosynthesis; L-arginine biosynthesis; N(2)-acetyl-L-ornithine from L-glutamate: step 2/4. In terms of biological role, catalyzes the ATP-dependent phosphorylation of N-acetyl-L-glutamate. This is Acetylglutamate kinase from Salmonella paratyphi A (strain ATCC 9150 / SARB42).